The chain runs to 76 residues: Putative antitoxin VapB2 (76 aa).

It belongs to the UPF0330 family.

Its function is as follows. Possibly the antitoxin component of a type II toxin-antitoxin (TA) system. Its cognate toxin is VapC2 (Potential). This is Putative antitoxin VapB2 (vapB2) from Pyrococcus abyssi (strain GE5 / Orsay).